A 409-amino-acid polypeptide reads, in one-letter code: MSTHPIHVFSEIGKLKKVMLHRPGKELENLMPDYLERLLFDDIPFLEDAQKEHDNFAQALRNEGIEVLYLEKLAAESLTSPEIRDQFIEEYLDEANIRGRQTKVAIRELLQGIKDNQELVEKTMAGVQKAELPEIPEAAKGLTDLVESDYPFAIDPMPNLYFTRDPFATIGNAVSLNHMYADTRNRETLYGKYIFKYHPVYGGNVELVYNREEDTRIEGGDELVLSKDVLAVGISQRTDAASIEKLLVNIFKKNVGFKKVLAFEFANNRKFMHLDTVFTMVDYDKFTIHPEIQGNLRVFSVTYENEQLKIVEEKGDLAELLAENLGVEKVTLIPCGDGNAVAAAREQWNDGSNTLTIAPGVVVVYDRNTVTNKKLEEYGLRLIKIRGSELVRGRGGPRCMSMPFEREEI.

The Amidino-cysteine intermediate role is filled by cysteine 399.

The protein belongs to the arginine deiminase family.

Its subcellular location is the cytoplasm. It carries out the reaction L-arginine + H2O = L-citrulline + NH4(+). The protein operates within amino-acid degradation; L-arginine degradation via ADI pathway; carbamoyl phosphate from L-arginine: step 1/2. The polypeptide is Arginine deiminase (Streptococcus gordonii (strain Challis / ATCC 35105 / BCRC 15272 / CH1 / DL1 / V288)).